The sequence spans 392 residues: 23S rRNA (uracil(747)-C(5))-methyltransferase RlmC (392 aa).

4 residues coordinate [4Fe-4S] cluster: Cys-4, Cys-12, Cys-15, and Cys-93. S-adenosyl-L-methionine contacts are provided by Gln-218, Phe-247, Glu-275, and Asn-321. Residue Cys-348 is the Nucleophile of the active site.

The protein belongs to the class I-like SAM-binding methyltransferase superfamily. RNA M5U methyltransferase family. RlmC subfamily.

The catalysed reaction is uridine(747) in 23S rRNA + S-adenosyl-L-methionine = 5-methyluridine(747) in 23S rRNA + S-adenosyl-L-homocysteine + H(+). Functionally, catalyzes the formation of 5-methyl-uridine at position 747 (m5U747) in 23S rRNA. This Haemophilus influenzae (strain PittGG) protein is 23S rRNA (uracil(747)-C(5))-methyltransferase RlmC.